Reading from the N-terminus, the 238-residue chain is tRNA1(Val) (adenine(37)-N6)-methyltransferase (238 aa).

The protein belongs to the methyltransferase superfamily. tRNA (adenine-N(6)-)-methyltransferase family.

It is found in the cytoplasm. The enzyme catalyses adenosine(37) in tRNA1(Val) + S-adenosyl-L-methionine = N(6)-methyladenosine(37) in tRNA1(Val) + S-adenosyl-L-homocysteine + H(+). Its function is as follows. Specifically methylates the adenine in position 37 of tRNA(1)(Val) (anticodon cmo5UAC). The protein is tRNA1(Val) (adenine(37)-N6)-methyltransferase of Cytophaga hutchinsonii (strain ATCC 33406 / DSM 1761 / CIP 103989 / NBRC 15051 / NCIMB 9469 / D465).